Here is a 473-residue protein sequence, read N- to C-terminus: Sulfate adenylyltransferase subunit 1 (473 aa).

The region spanning 19–238 is the tr-type G domain; that stretch reads KTLLKFLTCG…IKIKNSISSE (220 aa). The G1 stretch occupies residues 28–35; sequence GSVDDGKS. Residue 28-35 coordinates GTP; the sequence is GSVDDGKS. The interval 86–90 is G2; sequence GITID. The G3 stretch occupies residues 107 to 110; that stretch reads DTPG. Residues 107–111 and 162–165 contribute to the GTP site; these read DTPGH and NKMD. Residues 162 to 165 form a G4 region; the sequence is NKMD. Residues 200-202 are G5; the sequence is SAL.

Belongs to the TRAFAC class translation factor GTPase superfamily. Classic translation factor GTPase family. CysN/NodQ subfamily. In terms of assembly, heterodimer composed of CysD, the smaller subunit, and CysN.

The catalysed reaction is sulfate + ATP + H(+) = adenosine 5'-phosphosulfate + diphosphate. Its pathway is sulfur metabolism; hydrogen sulfide biosynthesis; sulfite from sulfate: step 1/3. With CysD forms the ATP sulfurylase (ATPS) that catalyzes the adenylation of sulfate producing adenosine 5'-phosphosulfate (APS) and diphosphate, the first enzymatic step in sulfur assimilation pathway. APS synthesis involves the formation of a high-energy phosphoric-sulfuric acid anhydride bond driven by GTP hydrolysis by CysN coupled to ATP hydrolysis by CysD. The chain is Sulfate adenylyltransferase subunit 1 from Buchnera aphidicola subsp. Acyrthosiphon pisum (strain 5A).